The sequence spans 320 residues: Ribosomal RNA small subunit methyltransferase H (320 aa).

Residues G42–H44, D62, F86, D108, and Q115 each bind S-adenosyl-L-methionine.

Belongs to the methyltransferase superfamily. RsmH family.

It localises to the cytoplasm. It carries out the reaction cytidine(1402) in 16S rRNA + S-adenosyl-L-methionine = N(4)-methylcytidine(1402) in 16S rRNA + S-adenosyl-L-homocysteine + H(+). Specifically methylates the N4 position of cytidine in position 1402 (C1402) of 16S rRNA. The polypeptide is Ribosomal RNA small subunit methyltransferase H (Yersinia pseudotuberculosis serotype O:1b (strain IP 31758)).